Consider the following 1712-residue polypeptide: Latent-transforming growth factor beta-binding protein 1 (1712 aa).

A signal peptide spans 1-23; the sequence is MAGAWLRWGLLLWAGLLAWSAHG. Residues 65 to 118 are disordered; sequence TAASSRALAGPPAERTRRTSQPGGAALPGLRSPLPPEPARPGGPSRQLHSKAGA. Positions 181 to 213 constitute an EGF-like 1 domain; the sequence is TKPSCVPPCQNGGMCLRPQLCVCKPGSKGKACE. Cystine bridges form between Cys-185–Cys-195, Cys-189–Cys-201, and Cys-203–Cys-212. N-linked (GlcNAc...) asparagine glycosylation is found at Asn-339 and Asn-370. An EGF-like 2 domain is found at 391–423; sequence RVVICHLPCMNGGQCSSRDKCQCPPNFTGKLCQ. Intrachain disulfides connect Cys-395/Cys-405, Cys-399/Cys-411, Cys-413/Cys-422, Cys-551/Cys-573, Cys-560/Cys-586, and Cys-574/Cys-589. Residue Asn-416 is glycosylated (N-linked (GlcNAc...) asparagine). The TB 1 domain occupies 549–601; sequence GRCFQETIGSQCGKALPGLSKQEDCCGTVGTSWGFNKCQKCPKKQSYHGYTQM. An N-linked (GlcNAc...) asparagine glycan is attached at Asn-612. An EGF-like 3; calcium-binding domain is found at 618–658; sequence DINECQLQGVCPNGECLNTMGSYRCSCKMGFGPDPTFSSCV. 7 cysteine pairs are disulfide-bonded: Cys-622–Cys-633, Cys-628–Cys-642, Cys-644–Cys-657, Cys-671–Cys-694, Cys-681–Cys-706, Cys-695–Cys-709, and Cys-696–Cys-721. Residue Ser-639 is glycosylated (O-linked (Glc) serine). In terms of domain architecture, TB 2 spans 669–721; sequence GPCYRLVSPGRHCMHPLSVHLTKQICCCSVGKAWGPHCEKCPLPGTAAFKEIC. The interval 753 to 799 is disordered; sequence NTQPVAKSTHPPPLPAKEEPVEALTSSWEHGPRGAEPEVVTAPPEKE. O-linked (GalNAc...) threonine glycosylation is found at Thr-761 and Thr-793. An EGF-like 4; calcium-binding domain is found at 865-906; that stretch reads EINECTVNPDICGAGHCINLPVRYTCICYEGYKFSEQLRKCV. 37 disulfide bridges follow: Cys-869-Cys-881, Cys-876-Cys-890, Cys-892-Cys-905, Cys-911-Cys-923, Cys-918-Cys-932, Cys-934-Cys-947, Cys-953-Cys-964, Cys-959-Cys-973, Cys-976-Cys-988, Cys-994-Cys-1005, Cys-1000-Cys-1014, Cys-1017-Cys-1028, Cys-1034-Cys-1045, Cys-1040-Cys-1054, Cys-1056-Cys-1069, Cys-1075-Cys-1086, Cys-1081-Cys-1095, Cys-1097-Cys-1110, Cys-1116-Cys-1127, Cys-1122-Cys-1136, Cys-1138-Cys-1151, Cys-1157-Cys-1169, Cys-1164-Cys-1178, Cys-1180-Cys-1192, Cys-1198-Cys-1210, Cys-1204-Cys-1219, Cys-1221-Cys-1234, Cys-1240-Cys-1252, Cys-1246-Cys-1261, Cys-1263-Cys-1276, Cys-1282-Cys-1294, Cys-1289-Cys-1303, Cys-1305-Cys-1319, Cys-1340-Cys-1363, Cys-1350-Cys-1375, Cys-1364-Cys-1380, and Cys-1365-Cys-1392. In terms of domain architecture, EGF-like 5; calcium-binding spans 907-948; it reads DIDECAQVRHLCSQGRCENTEGSFLCVCPAGFMASEEGTNCI. O-linked (Glc) serine glycosylation occurs at Ser-929. Residues 949–989 enclose the EGF-like 6; calcium-binding domain; the sequence is DVDECLRPDMCRDGRCINTAGAFRCEYCDSGYRMSRRGYCE. Asn-966 is modified ((3R)-3-hydroxyasparagine). The region spanning 990–1029 is the EGF-like 7; calcium-binding domain; it reads DIDECLKPSTCPEEQCVNTPGSYQCVPCTEGFRGWNGQCL. The O-linked (Glc) serine glycan is linked to Ser-1011. The region spanning 1030–1070 is the EGF-like 8; calcium-binding domain; it reads DVDECLQPKVCTNGSCTNLEGSYMCSCHRGYSPTPDHRHCQ. Asn-1042 carries N-linked (GlcNAc...) asparagine glycosylation. O-linked (Glc) serine glycosylation occurs at Ser-1051. Positions 1071–1111 constitute an EGF-like 9; calcium-binding domain; sequence DIDECQQGNLCMNGQCRNTDGSFRCTCGQGYQLSAAKDQCE. The EGF-like 10; calcium-binding domain occupies 1112 to 1152; the sequence is DIDECEHHHLCSHGQCRNTEGSFQCVCNQGYRASVLGDHCE. Asn-1129 is modified ((3R)-3-hydroxyasparagine). O-linked (Glc) serine glycosylation occurs at Ser-1133. Residues 1153–1193 enclose the EGF-like 11; calcium-binding domain; that stretch reads DINECLEDSSVCQGGDCINTAGSYDCTCPDGFQLNDNKGCQ. One can recognise an EGF-like 12; calcium-binding domain in the interval 1194-1235; the sequence is DINECAQPGLCGSHGECLNTQGSFHCVCEQGFSISADGRTCE. Ser-1216 carries O-linked (Glc) serine glycosylation. An EGF-like 13; calcium-binding domain is found at 1236-1277; the sequence is DIDECVNNTVCDSHGFCDNTAGSFRCLCYQGFQAPQDGQGCV. N-linked (GlcNAc...) asparagine glycosylation is present at Asn-1242. The region spanning 1278-1320 is the EGF-like 14; calcium-binding domain; sequence DVNECELLSGVCGEAFCENVEGSFLCVCADENQEYSPMTGQCR. Residues 1335–1402 form an 8-Cys3 region region; the sequence is EEKKECYYNL…PRGKGLVPAG (68 aa). The TB 3 domain maps to 1338–1392; it reads KECYYNLNDASLCDNVLAPNVTKQECCCTSGAGWGDNCEIFPCPVQGTAEFTEMC. An N-linked (GlcNAc...) asparagine glycan is attached at Asn-1357. Ser-1405 is modified (phosphoserine). Residues 1415 to 1457 enclose the EGF-like 15; calcium-binding domain; sequence DADECLLFGEEICKNGYCLNTQPGYECYCKQGTYYDPVKLQCF. Disulfide bonds link Cys-1419-Cys-1432, Cys-1427-Cys-1441, Cys-1443-Cys-1456, Cys-1462-Cys-1473, Cys-1468-Cys-1482, Cys-1484-Cys-1497, Cys-1517-Cys-1541, Cys-1527-Cys-1553, Cys-1542-Cys-1556, and Cys-1543-Cys-1568. In terms of domain architecture, EGF-like 16; calcium-binding spans 1458–1498; sequence DMDECQDPNSCIDGQCVNTEGSYNCFCTHPMVLDASEKRCV. An O-linked (Glc) serine glycan is attached at Ser-1479. The tract at residues 1498 to 1712 is C-terminal domain; sequence VQPTESNEQI…LNLDKESDLE (215 aa). Positions 1515 to 1568 constitute a TB 4 domain; the sequence is DLCWEHLSEEYVCSRPLVGKQTTYTECCCLYGEAWGMQCALCPMKDSDDYAQLC. Phosphoserine occurs at positions 1588 and 1607. An EGF-like 17 domain is found at 1612–1652; that stretch reads QAEECGILNGCENGRCVRVQEGYTCDCFDGYHLDMAKMTCV. Intrachain disulfides connect Cys-1616–Cys-1627, Cys-1622–Cys-1636, Cys-1638–Cys-1651, Cys-1657–Cys-1672, Cys-1667–Cys-1681, and Cys-1683–Cys-1696. The EGF-like 18; calcium-binding domain maps to 1653–1697; that stretch reads DVNECSELNNRMSLCKNAKCINTEGSYKCLCLPGYIPSDKPNYCT. Residue Ser-1678 is glycosylated (O-linked (Glc) serine).

It belongs to the LTBP family. Interacts with TGFB1; associates via disulfide bonds with the Latency-associated peptide chain (LAP) regulatory chain of TGFB1, leading to regulate activation of TGF-beta-1. LTBP1 does not bind directly to TGF-beta-1, the active chain of TGFB1. Interacts (via C-terminal domain) with FBN1 (via N-terminal domain). Interacts with FBN2. Interacts with ADAMTSL2. Interacts with EFEMP2. In terms of processing, contains hydroxylated asparagine residues. Post-translationally, two intrachain disulfide bonds from the TB3 domain are rearranged upon TGFB1 binding, and form interchain bonds with TGFB1 propeptide, anchoring it to the extracellular matrix. O-glycosylated on serine residues by POGLUT2 and POGLUT3.

Its subcellular location is the secreted. It localises to the extracellular space. The protein resides in the extracellular matrix. Its function is as follows. Key regulator of transforming growth factor beta (TGFB1, TGFB2 and TGFB3) that controls TGF-beta activation by maintaining it in a latent state during storage in extracellular space. Associates specifically via disulfide bonds with the Latency-associated peptide (LAP), which is the regulatory chain of TGF-beta, and regulates integrin-dependent activation of TGF-beta. Outcompeted by LRRC32/GARP for binding to LAP regulatory chain of TGF-beta. The chain is Latent-transforming growth factor beta-binding protein 1 from Mus musculus (Mouse).